The primary structure comprises 392 residues: Protein-glutamate methylesterase/protein-glutamine glutaminase (392 aa).

One can recognise a Response regulatory domain in the interval 9–126 (TVLIVDDSPF…GADIQALARD (118 aa)). A 4-aspartylphosphate modification is found at D60. The interval 148-194 (VSRISSASGSRPPWTAGAASENTNRLSSPGSTSSTLGSAKGRSLDSG) is disordered. Positions 173-185 (LSSPGSTSSTLGS) are enriched in low complexity. The region spanning 198-392 (PKYPVEIVAI…RHIVECVQRR (195 aa)) is the CheB-type methylesterase domain. Catalysis depends on residues S210, H237, and D334.

The protein belongs to the CheB family. Post-translationally, phosphorylated by CheA. Phosphorylation of the N-terminal regulatory domain activates the methylesterase activity.

The protein resides in the cytoplasm. It carries out the reaction [protein]-L-glutamate 5-O-methyl ester + H2O = L-glutamyl-[protein] + methanol + H(+). The enzyme catalyses L-glutaminyl-[protein] + H2O = L-glutamyl-[protein] + NH4(+). Functionally, involved in chemotaxis. Part of a chemotaxis signal transduction system that modulates chemotaxis in response to various stimuli. Catalyzes the demethylation of specific methylglutamate residues introduced into the chemoreceptors (methyl-accepting chemotaxis proteins or MCP) by CheR. Also mediates the irreversible deamidation of specific glutamine residues to glutamic acid. The chain is Protein-glutamate methylesterase/protein-glutamine glutaminase from Desulfitobacterium hafniense (strain Y51).